The chain runs to 346 residues: Phosphate acyltransferase (346 aa).

The protein belongs to the PlsX family. As to quaternary structure, homodimer. Probably interacts with PlsY.

Its subcellular location is the cytoplasm. It carries out the reaction a fatty acyl-[ACP] + phosphate = an acyl phosphate + holo-[ACP]. It participates in lipid metabolism; phospholipid metabolism. Functionally, catalyzes the reversible formation of acyl-phosphate (acyl-PO(4)) from acyl-[acyl-carrier-protein] (acyl-ACP). This enzyme utilizes acyl-ACP as fatty acyl donor, but not acyl-CoA. The sequence is that of Phosphate acyltransferase from Pelobacter propionicus (strain DSM 2379 / NBRC 103807 / OttBd1).